The following is a 368-amino-acid chain: GLABROUS1 enhancer-binding protein-like (368 aa).

A disordered region spans residues 1-123; that stretch reads MAPKKAEEVV…TSDTEHVKKP (123 aa). A compositionally biased stretch (acidic residues) spans 17-31; sequence SEEEESGSSGEESES. The span at 35 to 47 shows a compositional bias: basic and acidic residues; it reads VPKKVESSQKPES. Polar residues predominate over residues 84–97; sequence TSGSAATVPESSTA. Over residues 100–123 the composition is skewed to basic and acidic residues; the sequence is PLKEAAPEAIKKQKTSDTEHVKKP.

It belongs to the GeBP family. Mono-, di- and oligomers. Associated with the Mediator complex. Interacts with MED6. Interacts with MED10A, MED28 and MED32. Interacts with DEK3.

It is found in the nucleus. Transcription factor that binds promoters containing the CryR2 element, 5'-ACATAWCT-3'. The DNA-binding activity is decreased upon direct physical interaction with the mediator subunits and is modulated by redox conditions. The oxidized protein is the preferential binding form. This Arabidopsis thaliana (Mouse-ear cress) protein is GLABROUS1 enhancer-binding protein-like.